Here is a 418-residue protein sequence, read N- to C-terminus: Probable serine hydroxymethyltransferase (418 aa).

Residues Leu-118 and 122-124 contribute to the (6S)-5,6,7,8-tetrahydrofolate site; that span reads GHL. Lys-226 is subject to N6-(pyridoxal phosphate)lysine. 351–353 contributes to the (6S)-5,6,7,8-tetrahydrofolate binding site; sequence SPF.

It belongs to the SHMT family. Homodimer. Pyridoxal 5'-phosphate serves as cofactor.

Its subcellular location is the cytoplasm. The catalysed reaction is (6R)-5,10-methylene-5,6,7,8-tetrahydrofolate + glycine + H2O = (6S)-5,6,7,8-tetrahydrofolate + L-serine. The protein operates within one-carbon metabolism; tetrahydrofolate interconversion. Its function is as follows. Catalyzes the reversible interconversion of serine and glycine with tetrahydrofolate (THF) serving as the one-carbon carrier. This reaction serves as the major source of one-carbon groups required for the biosynthesis of purines, thymidylate, methionine, and other important biomolecules. This Mesomycoplasma hyopneumoniae (strain J / ATCC 25934 / NCTC 10110) (Mycoplasma hyopneumoniae) protein is Probable serine hydroxymethyltransferase.